The primary structure comprises 113 residues: Hydrogenase maturation factor HybF (113 aa).

The Ni(2+) site is built by histidine 2 and glutamate 3. Positions 73, 76, 89, and 92 each coordinate Zn(2+).

Belongs to the HypA/HybF family. HybF subfamily.

In terms of biological role, involved in the maturation of [NiFe] hydrogenases. Required for nickel insertion into the metal center of the hydrogenase. In Escherichia coli O6:H1 (strain CFT073 / ATCC 700928 / UPEC), this protein is Hydrogenase maturation factor HybF.